The chain runs to 264 residues: Glutamate racemase (264 aa).

Substrate-binding positions include 10 to 11 (DS) and 42 to 43 (YG). The Proton donor/acceptor role is filled by Cys-73. 74-75 (NT) lines the substrate pocket. Cys-183 (proton donor/acceptor) is an active-site residue. 184–185 (TH) provides a ligand contact to substrate.

Belongs to the aspartate/glutamate racemases family.

The catalysed reaction is L-glutamate = D-glutamate. The protein operates within cell wall biogenesis; peptidoglycan biosynthesis. In terms of biological role, provides the (R)-glutamate required for cell wall biosynthesis. This is Glutamate racemase from Streptococcus pyogenes serotype M18 (strain MGAS8232).